The sequence spans 347 residues: NADH-ubiquinone oxidoreductase chain 2 (347 aa).

Helical transmembrane passes span 3-23 (PPIL…VMLS), 25-45 (HWLL…PVLM), 66-86 (ASML…QWVV), 96-116 (IMMT…FWVP), 122-142 (ITLT…MSVL), 149-169 (INTN…GWGG), 178-198 (IMAY…IYNP), 201-221 (MILN…LFML), 237-257 (FPLI…LPPL), 274-294 (NMII…YFYL), and 323-343 (TILL…TPML).

It belongs to the complex I subunit 2 family. In terms of assembly, core subunit of respiratory chain NADH dehydrogenase (Complex I) which is composed of 45 different subunits. Interacts with TMEM242.

The protein localises to the mitochondrion inner membrane. It carries out the reaction a ubiquinone + NADH + 5 H(+)(in) = a ubiquinol + NAD(+) + 4 H(+)(out). Functionally, core subunit of the mitochondrial membrane respiratory chain NADH dehydrogenase (Complex I) which catalyzes electron transfer from NADH through the respiratory chain, using ubiquinone as an electron acceptor. Essential for the catalytic activity and assembly of complex I. The chain is NADH-ubiquinone oxidoreductase chain 2 from Canis rufus (Red wolf).